A 755-amino-acid polypeptide reads, in one-letter code: Proprotein convertase subtilisin/kexin type 4 (755 aa).

Residues 1–25 (MRPAPIALWLRLVLALALVRPRAVG) form the signal peptide. A propeptide spanning residues 26–113 (WAPVRAPIYV…QQTLQRRVKR (88 aa)) is cleaved from the precursor. A Peptidase S8 domain is found at 126–440 (QWYMNSEAQP…YGLLDAGLLV (315 aa)). Active-site charge relay system residues include Asp-158, His-199, and Ser-373. One can recognise a P/Homo B domain in the interval 449-581 (TQPQRKCAVR…TLLLYGTAED (133 aa)). Residues Asn-475 and Asn-629 are each glycosylated (N-linked (GlcNAc...) asparagine). The chain crosses the membrane as a helical span at residues 709–729 (AMVLSLLAVTLGGPVLCGMSM).

This sequence belongs to the peptidase S8 family. Furin subfamily. The proPCSK4 form interacts with HSPA5; the interaction takes place at the endoplasmic reticulum. Post-translationally, N-glycosylated. In terms of processing, synthesized in the endoplasmic reticulum as a zymogen, is matured by autocatalytic cleavage between the prodomain and the catalytic domain. In terms of tissue distribution, placenta.

It localises to the membrane. It is found in the cytoplasmic vesicle. Its subcellular location is the secretory vesicle. The protein resides in the acrosome membrane. Its function is as follows. Proprotein convertase involved in the processing of hormone and other protein precursors at sites comprised of pairs of basic amino acid residues. In males, important for ADAM2 processing as well as other acrosomal proteins with roles in fertilization and critical for normal fertilization events such as sperm capacitation, acrosome reaction and binding of sperm to zona pellucida. Also plays a role in female fertility, involved in the regulation of trophoblast migration and placental development, may be through the proteolytical processing and activation of proteins such as IGF2. May also participate in folliculogenesis in the ovaries. The sequence is that of Proprotein convertase subtilisin/kexin type 4 from Homo sapiens (Human).